The following is a 160-amino-acid chain: SsrA-binding protein (160 aa).

A disordered region spans residues 134 to 160 (RKAHDKREAVKERDWNRDKARLMRDRG). The segment covering 138-160 (DKREAVKERDWNRDKARLMRDRG) has biased composition (basic and acidic residues).

This sequence belongs to the SmpB family.

It is found in the cytoplasm. Functionally, required for rescue of stalled ribosomes mediated by trans-translation. Binds to transfer-messenger RNA (tmRNA), required for stable association of tmRNA with ribosomes. tmRNA and SmpB together mimic tRNA shape, replacing the anticodon stem-loop with SmpB. tmRNA is encoded by the ssrA gene; the 2 termini fold to resemble tRNA(Ala) and it encodes a 'tag peptide', a short internal open reading frame. During trans-translation Ala-aminoacylated tmRNA acts like a tRNA, entering the A-site of stalled ribosomes, displacing the stalled mRNA. The ribosome then switches to translate the ORF on the tmRNA; the nascent peptide is terminated with the 'tag peptide' encoded by the tmRNA and targeted for degradation. The ribosome is freed to recommence translation, which seems to be the essential function of trans-translation. This chain is SsrA-binding protein, found in Azorhizobium caulinodans (strain ATCC 43989 / DSM 5975 / JCM 20966 / LMG 6465 / NBRC 14845 / NCIMB 13405 / ORS 571).